The chain runs to 777 residues: Isoamylase (777 aa).

The N-terminal stretch at 1 to 32 (MDPHAPQRQRSGQRLRALALAALACALSPAHA) is a signal peptide. Residues D162, E263, T264, N266, and D293 each contribute to the Ca(2+) site. The active-site Nucleophile is D410. A disulfide bridge connects residues C419 and C423. The active-site Proton donor is E458.

It belongs to the glycosyl hydrolase 13 family. In terms of assembly, monomer. The cofactor is Ca(2+).

The enzyme catalyses Hydrolysis of (1-&gt;6)-alpha-D-glucosidic branch linkages in glycogen, amylopectin and their beta-limit dextrins.. In terms of biological role, has a high rate of hydrolysis for glycogen. Does not cleave pullulan. In Flavobacterium sp, this protein is Isoamylase (iam).